We begin with the raw amino-acid sequence, 375 residues long: Putative disease resistance protein At3g15700 (375 aa).

The stretch at 17–49 forms a coiled coil; that stretch reads KENDNVKKLKTATEELKDLRNIVMKRVKMYEDQ. The NB-ARC domain maps to 158 to 372; sequence DNTGIIGLYG…LSTSPPNFSG (215 aa). Residue 167-174 coordinates ATP; the sequence is GVEGVGKT.

Its function is as follows. Potential disease resistance protein. The sequence is that of Putative disease resistance protein At3g15700 from Arabidopsis thaliana (Mouse-ear cress).